We begin with the raw amino-acid sequence, 728 residues long: Catalase-peroxidase 1 (728 aa).

The tryptophyl-tyrosyl-methioninium (Trp-Tyr) (with M-244) cross-link spans W91–Y218. H92 acts as the Proton acceptor in catalysis. Residues Y218–M244 constitute a cross-link (tryptophyl-tyrosyl-methioninium (Tyr-Met) (with W-91)). H259 serves as a coordination point for heme b.

It belongs to the peroxidase family. Peroxidase/catalase subfamily. In terms of assembly, homodimer or homotetramer. Heme b serves as cofactor. In terms of processing, formation of the three residue Trp-Tyr-Met cross-link is important for the catalase, but not the peroxidase activity of the enzyme.

The catalysed reaction is H2O2 + AH2 = A + 2 H2O. It catalyses the reaction 2 H2O2 = O2 + 2 H2O. Its function is as follows. Bifunctional enzyme with both catalase and broad-spectrum peroxidase activity. The protein is Catalase-peroxidase 1 of Burkholderia ambifaria (strain MC40-6).